Consider the following 410-residue polypeptide: WD repeat and FYVE domain-containing protein 1 (410 aa).

WD repeat units follow at residues 22–61 (GHQD…QYWP), 66–105 (TMAS…NKMN), 112–150 (AHQN…NMLG), 153–192 (FFSS…CSVI), 197–236 (GHEG…GRTL), and 240–279 (GHHD…EEAP). The FYVE-type zinc-finger motif lies at 281 to 352 (WLESDSCQKC…VCDSCYDSIK (72 aa)). The Zn(2+) site is built by C287, C290, C314, C317, C322, C325, C344, and C347. One copy of the WD 7 repeat lies at 364–403 (EGKHNISHMSMDIARGLMVTCGTDRVVKIWDMTPVVGCSL). At S408 the chain carries Phosphoserine.

In terms of assembly, binds PtdIns3P in vitro with high specificity over other phosphoinositides. Interacts (via WD repeat 2) with tyrosine-phosphorylated TLR3 (via TIR domain) in response to poly(I:C). Interacts with TLR4 in response to LPS. Interacts with TICAM1 in response to poly(I:C).

Its subcellular location is the early endosome. Its function is as follows. Positively regulates TLR3- and TLR4-mediated signaling pathways by bridging the interaction between TLR3 or TLR4 and TICAM1. Promotes TLR3/4 ligand-induced activation of transcription factors IRF3 and NF-kappa-B, as well as the production of IFN-beta and inflammatory cytokines. In Mus musculus (Mouse), this protein is WD repeat and FYVE domain-containing protein 1 (Wdfy1).